The chain runs to 419 residues: Putative trans-acting enoyl reductase MT2525 (419 aa).

K127 participates in a covalent cross-link: Isoglutamyl lysine isopeptide (Lys-Gln) (interchain with Q-Cter in protein Pup). A disordered region spans residues 197–232; sequence NDPDARRQLSDPYMLSPDRGAEPELGPQPDLPSRRG. Residues 284–304 form a helical membrane-spanning segment; that stretch reads VLAPVVSVVGGGVGNAMFGLA.

This sequence belongs to the saccharopine dehydrogenase family. Enoyl reductase subfamily.

The protein localises to the cell membrane. In Mycobacterium tuberculosis (strain CDC 1551 / Oshkosh), this protein is Putative trans-acting enoyl reductase MT2525.